We begin with the raw amino-acid sequence, 1343 residues long: DNA-directed RNA polymerase subunit beta (1343 aa).

It belongs to the RNA polymerase beta chain family. In terms of assembly, the RNAP catalytic core consists of 2 alpha, 1 beta, 1 beta' and 1 omega subunit. When a sigma factor is associated with the core the holoenzyme is formed, which can initiate transcription.

The catalysed reaction is RNA(n) + a ribonucleoside 5'-triphosphate = RNA(n+1) + diphosphate. Its function is as follows. DNA-dependent RNA polymerase catalyzes the transcription of DNA into RNA using the four ribonucleoside triphosphates as substrates. This is DNA-directed RNA polymerase subunit beta from Shewanella frigidimarina (strain NCIMB 400).